The sequence spans 301 residues: Acetylglutamate kinase (301 aa).

Substrate is bound by residues 68–69, arginine 90, and asparagine 195; that span reads GG.

It belongs to the acetylglutamate kinase family. ArgB subfamily.

The protein localises to the cytoplasm. It carries out the reaction N-acetyl-L-glutamate + ATP = N-acetyl-L-glutamyl 5-phosphate + ADP. The protein operates within amino-acid biosynthesis; L-arginine biosynthesis; N(2)-acetyl-L-ornithine from L-glutamate: step 2/4. Functionally, catalyzes the ATP-dependent phosphorylation of N-acetyl-L-glutamate. The chain is Acetylglutamate kinase from Pseudomonas putida (strain ATCC 700007 / DSM 6899 / JCM 31910 / BCRC 17059 / LMG 24140 / F1).